A 372-amino-acid polypeptide reads, in one-letter code: Queuine tRNA-ribosyltransferase (372 aa).

Asp-89 serves as the catalytic Proton acceptor. Substrate-binding positions include 89–93, Asp-161, and Gly-232; that span reads DSGGF. The tract at residues 262–268 is RNA binding; the sequence is GIGDLPS. Asp-281 functions as the Nucleophile in the catalytic mechanism. Residues 286–290 are RNA binding; important for wobble base 34 recognition; sequence TKAAR. Residues Cys-319, Cys-321, Cys-324, and His-351 each coordinate Zn(2+).

Belongs to the queuine tRNA-ribosyltransferase family. Homodimer. Within each dimer, one monomer is responsible for RNA recognition and catalysis, while the other monomer binds to the replacement base PreQ1. Zn(2+) is required as a cofactor.

It carries out the reaction 7-aminomethyl-7-carbaguanine + guanosine(34) in tRNA = 7-aminomethyl-7-carbaguanosine(34) in tRNA + guanine. It functions in the pathway tRNA modification; tRNA-queuosine biosynthesis. Its function is as follows. Catalyzes the base-exchange of a guanine (G) residue with the queuine precursor 7-aminomethyl-7-deazaguanine (PreQ1) at position 34 (anticodon wobble position) in tRNAs with GU(N) anticodons (tRNA-Asp, -Asn, -His and -Tyr). Catalysis occurs through a double-displacement mechanism. The nucleophile active site attacks the C1' of nucleotide 34 to detach the guanine base from the RNA, forming a covalent enzyme-RNA intermediate. The proton acceptor active site deprotonates the incoming PreQ1, allowing a nucleophilic attack on the C1' of the ribose to form the product. After dissociation, two additional enzymatic reactions on the tRNA convert PreQ1 to queuine (Q), resulting in the hypermodified nucleoside queuosine (7-(((4,5-cis-dihydroxy-2-cyclopenten-1-yl)amino)methyl)-7-deazaguanosine). This chain is Queuine tRNA-ribosyltransferase, found in Chlamydia trachomatis serovar L2 (strain ATCC VR-902B / DSM 19102 / 434/Bu).